Reading from the N-terminus, the 333-residue chain is Gap junction alpha-4 protein (333 aa).

The Cytoplasmic segment spans residues 1–20 (MGDWGFLEKLLDQVQEHSTV). The helical transmembrane segment at 21 to 40 (VGKIWLTVLFIFRILILGLA) threads the bilayer. The Extracellular segment spans residues 41 to 76 (GESVWGDEQSDFECNTAQPGCTNVCYDQAFPISHIR). Residues 77–99 (YWVLQFLFVSTPTLVYLGHVIYL) form a helical membrane-spanning segment. The Cytoplasmic segment spans residues 100-148 (SRREERLRQKEGELRALPAKDPRVERALASIERQMAKISVAEDGHLRIR). Residues 149-165 (GALMGTYVASVLCKSVL) traverse the membrane as a helical segment. Over 166 to 207 (EAGFLYGQWRLYGWTMEPVFVCQRSPCPYLVDCFVSRPTEKT) the chain is Extracellular. A helical transmembrane segment spans residues 208–230 (IFIIFMLVVGLISLVLNLLELAY). At 231–333 (LLCRCLSRGV…SSSASKKQYV (103 aa)) the chain is on the cytoplasmic side. The tract at residues 303–333 (SRAPLFLDPPPQTGRKSPSRPSSSASKKQYV) is disordered. The segment covering 317–333 (RKSPSRPSSSASKKQYV) has biased composition (low complexity).

Belongs to the connexin family. Alpha-type (group II) subfamily. In terms of assembly, a connexon is composed of a hexamer of connexins.

Its subcellular location is the cell membrane. The protein localises to the cell junction. The protein resides in the gap junction. One gap junction consists of a cluster of closely packed pairs of transmembrane channels, the connexons, through which materials of low MW diffuse from one cell to a neighboring cell. The protein is Gap junction alpha-4 protein (GJA4) of Bos taurus (Bovine).